Consider the following 310-residue polypeptide: CRAL-TRIO domain-containing protein YKL091C (310 aa).

The CRAL-TRIO domain maps to 101–274 (ERIKLAKMYP…KYGGTSVLHN (174 aa)).

This is CRAL-TRIO domain-containing protein YKL091C from Saccharomyces cerevisiae (strain ATCC 204508 / S288c) (Baker's yeast).